The primary structure comprises 180 residues: Large ribosomal subunit protein uL6 (180 aa).

It belongs to the universal ribosomal protein uL6 family. In terms of assembly, part of the 50S ribosomal subunit.

In terms of biological role, this protein binds to the 23S rRNA, and is important in its secondary structure. It is located near the subunit interface in the base of the L7/L12 stalk, and near the tRNA binding site of the peptidyltransferase center. The sequence is that of Large ribosomal subunit protein uL6 from Mycoplasma capricolum subsp. capricolum (strain California kid / ATCC 27343 / NCTC 10154).